A 91-amino-acid polypeptide reads, in one-letter code: MARVTVQDAVEKIGNRFDLVLVAARRARQIQTGGKDPLVPEENDKYTVIALREIEEGLINNQILDVRDRQEQQEQEAAEIQAVTAIAEGRR.

Belongs to the RNA polymerase subunit omega family. The RNAP catalytic core consists of 2 alpha, 1 beta, 1 beta' and 1 omega subunit. When a sigma factor is associated with the core the holoenzyme is formed, which can initiate transcription.

It carries out the reaction RNA(n) + a ribonucleoside 5'-triphosphate = RNA(n+1) + diphosphate. Promotes RNA polymerase assembly. Latches the N- and C-terminal regions of the beta' subunit thereby facilitating its interaction with the beta and alpha subunits. The polypeptide is DNA-directed RNA polymerase subunit omega (Pectobacterium carotovorum subsp. carotovorum (strain PC1)).